The sequence spans 680 residues: MNGRKLPDGGVLYDDTDESEDDIEVEGDASVAAPLAATVDWNAGSLNETGLLGAELIGEFVKRLPNSPGVYRMFNAEGDVLYVGKARSLKKRVNNYAVGRVHSNRIAQMVRQTANMEFVTTRTETEALLLEANLIKRLRPRFNVLLRDDKSFPYILITGDHRAPAIFKHRGARARKGDYFGPFASAGAVGRTINSLQRAFLIRTCTDSVFETRTRPCLLYQIKRCSGPCTHEVSDGGYGELVQEAKDFLSGKSQKVKSHMAEAMNQAAEDLDFERAAIYRDRLAALSHVQSHQGINPAGVEEADVFAIHHEGGISCIQVFFFRTGQNWGNRAYFPKADPQLSSAEVLNSFLAQFYDDKPVPKQIMLSQTVEELELLAAALSEKAGHKVSMLVPQRGEKRDLVDHVVGNAREAHGRKLAETASQSRLLEGFKETFGLAYAPQRIEIYDNSHIMGTNAVGGMVVAGPEGFVKNQYRKFNIKSTDITPGDDFGMMKEVMTRRFSRLIKEEGIPDRTAQVATPDAADMPFPTWPDVILIDGGQGQMTAVRAILAELGITDSVTAIGIAKGVDRDAGRERFFPPGRESFTLPPRDPVLYFIQRMRDEAHRFAIGSHRARRKKEMIKNPLDEIGGIGPSRKRALLQHFGTAKAVSRAALSDLMAVEGISEAVARQVYNHFHDDAAK.

The GIY-YIG domain maps to 66-144; sequence NSPGVYRMFN…IKRLRPRFNV (79 aa). Residues 254–289 enclose the UVR domain; it reads QKVKSHMAEAMNQAAEDLDFERAAIYRDRLAALSHV.

The protein belongs to the UvrC family. Interacts with UvrB in an incision complex.

It is found in the cytoplasm. Functionally, the UvrABC repair system catalyzes the recognition and processing of DNA lesions. UvrC both incises the 5' and 3' sides of the lesion. The N-terminal half is responsible for the 3' incision and the C-terminal half is responsible for the 5' incision. The chain is UvrABC system protein C from Rhizobium johnstonii (strain DSM 114642 / LMG 32736 / 3841) (Rhizobium leguminosarum bv. viciae).